Reading from the N-terminus, the 379-residue chain is Cytochrome b (379 aa).

A run of 4 helical transmembrane segments spans residues 33–53 (FGSL…FLAM), 77–98 (WTIR…FIHV), 113–133 (WNIG…GYVL), and 178–198 (FFAL…IHLL). 2 residues coordinate heme b: histidine 83 and histidine 97. Heme b is bound by residues histidine 182 and histidine 196. Histidine 201 is an a ubiquinone binding site. 4 helical membrane passes run 226-246 (TKDF…TLFY), 288-308 (LGGV…PFLQ), 320-340 (LSQF…WIGG), and 347-367 (FISI…FIMP).

The protein belongs to the cytochrome b family. In terms of assembly, the cytochrome bc1 complex contains 11 subunits: 3 respiratory subunits (MT-CYB, CYC1 and UQCRFS1), 2 core proteins (UQCRC1 and UQCRC2) and 6 low-molecular weight proteins (UQCRH/QCR6, UQCRB/QCR7, UQCRQ/QCR8, UQCR10/QCR9, UQCR11/QCR10 and a cleavage product of UQCRFS1). This cytochrome bc1 complex then forms a dimer. Heme b serves as cofactor.

The protein localises to the mitochondrion inner membrane. Its function is as follows. Component of the ubiquinol-cytochrome c reductase complex (complex III or cytochrome b-c1 complex) that is part of the mitochondrial respiratory chain. The b-c1 complex mediates electron transfer from ubiquinol to cytochrome c. Contributes to the generation of a proton gradient across the mitochondrial membrane that is then used for ATP synthesis. The polypeptide is Cytochrome b (MT-CYB) (Lepilemur randrianasoloi (Randrianasoli's sportive lemur)).